Here is a 173-residue protein sequence, read N- to C-terminus: Cell division protein SepF (173 aa).

The disordered stretch occupies residues Phe-31–Leu-82. Composition is skewed to basic and acidic residues over residues Asp-39 to Arg-53 and Ser-60 to Ser-72.

This sequence belongs to the SepF family. As to quaternary structure, homodimer. Interacts with FtsZ.

The protein resides in the cytoplasm. In terms of biological role, cell division protein that is part of the divisome complex and is recruited early to the Z-ring. Probably stimulates Z-ring formation, perhaps through the cross-linking of FtsZ protofilaments. Its function overlaps with FtsA. This is Cell division protein SepF from Thermobifida fusca (strain YX).